The following is a 332-amino-acid chain: Formamidase (332 aa).

The 246-residue stretch at 14–259 (FLTALIQYPV…WEIVTAEVYP (246 aa)) folds into the CN hydrolase domain. Residue Glu60 is the Proton acceptor of the active site. The Proton donor role is filled by Lys132. The Nucleophile role is filled by Cys165.

It belongs to the carbon-nitrogen hydrolase superfamily. Aliphatic amidase family.

The enzyme catalyses formamide + H2O = formate + NH4(+). Functionally, is an aliphatic amidase with a restricted substrate specificity, as it only hydrolyzes formamide. This Bacillus cereus (strain ZK / E33L) protein is Formamidase.